The following is a 217-amino-acid chain: THAP domain-containing protein 2 (217 aa).

A THAP-type zinc finger spans residues 1 to 80 (MPTNCAAAGC…LKMDAVPTIF (80 aa)). An HCFC1-binding motif (HBM) motif is present at residues 122-125 (EHSY).

In Mus musculus (Mouse), this protein is THAP domain-containing protein 2 (Thap2).